Reading from the N-terminus, the 406-residue chain is Cysteine desulfurase IscS (406 aa).

Pyridoxal 5'-phosphate contacts are provided by residues 75 to 76 (AT), Asn155, Gln183, and 203 to 205 (SSH). Residue Lys206 is modified to N6-(pyridoxal phosphate)lysine. Residue Thr243 coordinates pyridoxal 5'-phosphate. The active-site Cysteine persulfide intermediate is Cys330. Residue Cys330 participates in [2Fe-2S] cluster binding.

It belongs to the class-V pyridoxal-phosphate-dependent aminotransferase family. NifS/IscS subfamily. As to quaternary structure, homodimer. Forms a heterotetramer with IscU, interacts with other sulfur acceptors. Requires pyridoxal 5'-phosphate as cofactor.

The protein localises to the cytoplasm. It carries out the reaction (sulfur carrier)-H + L-cysteine = (sulfur carrier)-SH + L-alanine. It functions in the pathway cofactor biosynthesis; iron-sulfur cluster biosynthesis. Master enzyme that delivers sulfur to a number of partners involved in Fe-S cluster assembly, tRNA modification or cofactor biosynthesis. Catalyzes the removal of elemental sulfur atoms from cysteine to produce alanine. Functions as a sulfur delivery protein for Fe-S cluster synthesis onto IscU, an Fe-S scaffold assembly protein, as well as other S acceptor proteins. The sequence is that of Cysteine desulfurase IscS from Glaesserella parasuis serovar 5 (strain SH0165) (Haemophilus parasuis).